The sequence spans 1002 residues: Calmin (1002 aa).

The interval 1-288 (MAAHEWDWFQ…IMTYVAQFLE (288 aa)) is actin-binding. Residues 32–139 (NVQKRTFTRW…LIWNIILFFQ (108 aa)) enclose the Calponin-homology (CH) 1 domain. Over residues 149–168 (RNSPSSSLSPGSGGTDSDSS) the composition is skewed to low complexity. A disordered region spans residues 149–180 (RNSPSSSLSPGSGGTDSDSSFPPTPTAERSVA). One can recognise a Calponin-homology (CH) 2 domain in the interval 187 to 291 (RKAIKALLAW…YVAQFLERFP (105 aa)). A phosphoserine mark is found at Ser301 and Ser402. Disordered regions lie at residues 389–418 (QGGP…GRSN), 500–532 (NNNS…GENT), 581–716 (NKVP…SPPL), and 749–911 (DLKN…DSSI). The span at 396 to 409 (SDISEPSPESSILS) shows a compositional bias: low complexity. Residues 500 to 509 (NNNSQSSSCN) show a composition bias toward polar residues. A compositionally biased stretch (basic and acidic residues) spans 585–606 (SPHETKPDEDAEAFENHAEKLG). A compositionally biased stretch (basic residues) spans 607 to 617 (KRSIKSAHKKK). 2 stretches are compositionally biased toward basic and acidic residues: residues 618–635 (DSPE…HQDS) and 650–659 (PVDKKPEVHE). Residue Ser619 is modified to Phosphoserine. A compositionally biased stretch (low complexity) spans 681-697 (GVGEELSSSPPSSCVSL). Thr699 carries the post-translational modification Phosphothreonine. Phosphoserine is present on residues Ser713 and Ser769. The span at 776 to 794 (GSQSSSSSSVPGESLPSAS) shows a compositional bias: low complexity. Positions 818–834 (PHEDHQQRETKENDPMD) are enriched in basic and acidic residues. Polar residues predominate over residues 835-846 (SHQSQESPNLEN). Phosphoserine occurs at positions 838 and 841. Positions 854 to 863 (NVTKESISSK) are enriched in basic and acidic residues. Residues 898-910 (YSIPSRTSHSDSS) show a composition bias toward polar residues. Phosphoserine is present on Ser907. A helical; Anchor for type IV membrane protein transmembrane segment spans residues 977–997 (MMYFILFLWLLVYCLLLFPQL).

As to expression, widely expressed at intermediate level.

The protein localises to the membrane. The sequence is that of Calmin (CLMN) from Homo sapiens (Human).